Here is a 315-residue protein sequence, read N- to C-terminus: Transaldolase (315 aa).

Lys131 serves as the catalytic Schiff-base intermediate with substrate.

This sequence belongs to the transaldolase family. Type 1 subfamily. Homodimer.

The protein localises to the cytoplasm. It catalyses the reaction D-sedoheptulose 7-phosphate + D-glyceraldehyde 3-phosphate = D-erythrose 4-phosphate + beta-D-fructose 6-phosphate. It functions in the pathway carbohydrate degradation; pentose phosphate pathway; D-glyceraldehyde 3-phosphate and beta-D-fructose 6-phosphate from D-ribose 5-phosphate and D-xylulose 5-phosphate (non-oxidative stage): step 2/3. In terms of biological role, transaldolase is important for the balance of metabolites in the pentose-phosphate pathway. This chain is Transaldolase, found in Actinobacillus pleuropneumoniae serotype 7 (strain AP76).